We begin with the raw amino-acid sequence, 714 residues long: Calpain-1 catalytic subunit (714 aa).

Positions 55 to 354 (LFRDEAFPPV…FTRLEICNLT (300 aa)) constitute a Calpain catalytic domain. Ca(2+) is bound by residues Gln109 and Asp114. Catalysis depends on residues Cys115, His272, and Asn296. 3 residues coordinate Ca(2+): Ser316, Asp318, and Glu323. Thr354 is modified (phosphothreonine). The domain III stretch occupies residues 355 to 526 (PDALKSRTIR…KSAGTAELDD (172 aa)). The tract at residues 527–542 (QIQANLPDEQVLSEEE) is linker. 4 EF-hand domains span residues 541–576 (EEIDENFKALFRQLAGEDMEISVKELRTILNRIISK), 585–618 (FSLESCRSMVNLMDRDGNGKLGLVEFNILWNRIR), 615–650 (NRIRNYLSIFRKFDLDKSGSMSAYEMRMAIESAGFK), and 680–714 (VRLETMFRFFKTLDTDLDGVVTFDLFKWLQLTMFA). The segment at 543–713 (IDENFKALFR…LFKWLQLTMF (171 aa)) is domain IV. Ca(2+) contacts are provided by Asp598, Asp600, Asn602, Lys604, Glu609, Asp628, Asp630, Ser632, Ser634, and Glu639.

Belongs to the peptidase C2 family. Forms a heterodimer with a small (regulatory) subunit (CAPNS1). Ca(2+) is required as a cofactor. Post-translationally, undergoes calcium-induced successive autoproteolytic cleavages that generate a membrane-bound 78 kDa active form and an intracellular 75 kDa active form. Calpastatin reduces with high efficiency the transition from 78 kDa to 75 kDa calpain forms. As to expression, ubiquitous.

The protein resides in the cytoplasm. Its subcellular location is the cell membrane. The catalysed reaction is Broad endopeptidase specificity.. With respect to regulation, activated by micromolar concentrations of calcium and inhibited by calpastatin. Functionally, calcium-regulated non-lysosomal thiol-protease which catalyze limited proteolysis of substrates involved in cytoskeletal remodeling and signal transduction. Proteolytically cleaves CTBP1. Cleaves and activates caspase-7 (CASP7). The protein is Calpain-1 catalytic subunit (CAPN1) of Macaca fascicularis (Crab-eating macaque).